Reading from the N-terminus, the 157-residue chain is NudC domain-containing protein 2 (157 aa).

N-acetylserine is present on S2. In terms of domain architecture, CS spans 14-104; the sequence is CATPWGQWYQ…DAANCWTSLL (91 aa). Residues 134-157 are disordered; the sequence is FDFSGAEISGNYTKGGPDFSNLEK. A Phosphoserine modification is found at S142. Position 145 is a phosphotyrosine (Y145).

Interacts with LIS1.

The protein resides in the chromosome. It localises to the centromere. It is found in the kinetochore. Its subcellular location is the cytoplasm. The protein localises to the cytoskeleton. The protein resides in the microtubule organizing center. It localises to the centrosome. It is found in the spindle pole. Functionally, may regulate the LIS1/dynein pathway by stabilizing LIS1 with Hsp90 chaperone. The chain is NudC domain-containing protein 2 (Nudcd2) from Rattus norvegicus (Rat).